Consider the following 633-residue polypeptide: Extracellular metalloproteinase 3 (633 aa).

The N-terminal stretch at 1 to 18 is a signal peptide; the sequence is MHGLLLAGLLALPMNVLA. The propeptide occupies 19-246; that stretch reads HPAEQQTSSV…VHNVVDYVAS (228 aa). N-linked (GlcNAc...) asparagine glycosylation occurs at Asn410. His429 serves as a coordination point for Zn(2+). Residue Glu430 is part of the active site. A Zn(2+)-binding site is contributed by His433. Asn480 is a glycosylation site (N-linked (GlcNAc...) asparagine).

Belongs to the peptidase M36 family. Zn(2+) serves as cofactor.

Its subcellular location is the secreted. Secreted metalloproteinase probably acting as a virulence factor. The chain is Extracellular metalloproteinase 3 (MEP3) from Arthroderma otae (Microsporum canis).